The following is a 63-amino-acid chain: Protein Wfdc21 (63 aa).

A signal peptide spans 1–24 (MKLGAFLLLVSLITLSLEVQELQA). One can recognise a WAP; atypical domain in the interval 25 to 63 (AVRPLQLLGTCAELCRGDWDCGPEEQCVSIGCSHICTTN). Cystine bridges form between Cys-35/Cys-56, Cys-39/Cys-51, and Cys-45/Cys-60.

Predominantly expressed in white adipose tissue and liver.

The protein resides in the secreted. Functionally, may promote activation of the metalloproteinase MMP2. This Mus musculus (Mouse) protein is Protein Wfdc21.